The sequence spans 621 residues: tRNA uridine 5-carboxymethylaminomethyl modification enzyme MnmG (621 aa).

17-22 (GGGHAG) serves as a coordination point for FAD. Residue 276–290 (GPRYCPSIEDKIMKF) coordinates NAD(+).

The protein belongs to the MnmG family. In terms of assembly, homodimer. Heterotetramer of two MnmE and two MnmG subunits. FAD serves as cofactor.

It localises to the cytoplasm. In terms of biological role, NAD-binding protein involved in the addition of a carboxymethylaminomethyl (cmnm) group at the wobble position (U34) of certain tRNAs, forming tRNA-cmnm(5)s(2)U34. In Zymomonas mobilis subsp. mobilis (strain ATCC 31821 / ZM4 / CP4), this protein is tRNA uridine 5-carboxymethylaminomethyl modification enzyme MnmG.